We begin with the raw amino-acid sequence, 266 residues long: Ribosomal RNA small subunit methyltransferase A (266 aa).

S-adenosyl-L-methionine contacts are provided by N12, L14, G39, E61, D87, and N107.

It belongs to the class I-like SAM-binding methyltransferase superfamily. rRNA adenine N(6)-methyltransferase family. RsmA subfamily.

It is found in the cytoplasm. It carries out the reaction adenosine(1518)/adenosine(1519) in 16S rRNA + 4 S-adenosyl-L-methionine = N(6)-dimethyladenosine(1518)/N(6)-dimethyladenosine(1519) in 16S rRNA + 4 S-adenosyl-L-homocysteine + 4 H(+). Its function is as follows. Specifically dimethylates two adjacent adenosines (A1518 and A1519) in the loop of a conserved hairpin near the 3'-end of 16S rRNA in the 30S particle. May play a critical role in biogenesis of 30S subunits. The protein is Ribosomal RNA small subunit methyltransferase A of Nitratidesulfovibrio vulgaris (strain ATCC 29579 / DSM 644 / CCUG 34227 / NCIMB 8303 / VKM B-1760 / Hildenborough) (Desulfovibrio vulgaris).